A 254-amino-acid polypeptide reads, in one-letter code: Phosphonates import ATP-binding protein PhnC 2 (254 aa).

The ABC transporter domain maps to 4–248; that stretch reads LEVNNLGKHY…KIESIYGFQQ (245 aa). Residue 37-44 participates in ATP binding; sequence GPSGAGKS.

The protein belongs to the ABC transporter superfamily. Phosphonates importer (TC 3.A.1.9.1) family. The complex is composed of two ATP-binding proteins (PhnC), two transmembrane proteins (PhnE) and a solute-binding protein (PhnD).

The protein localises to the cell membrane. The enzyme catalyses phosphonate(out) + ATP + H2O = phosphonate(in) + ADP + phosphate + H(+). Part of the ABC transporter complex PhnCDE involved in phosphonates import. Responsible for energy coupling to the transport system. This is Phosphonates import ATP-binding protein PhnC 2 from Oceanobacillus iheyensis (strain DSM 14371 / CIP 107618 / JCM 11309 / KCTC 3954 / HTE831).